The primary structure comprises 537 residues: Arginine--tRNA ligase (537 aa).

Positions 113–123 (ANPTGRIHLGH) match the 'HIGH' region motif.

This sequence belongs to the class-I aminoacyl-tRNA synthetase family. In terms of assembly, monomer.

It is found in the cytoplasm. The catalysed reaction is tRNA(Arg) + L-arginine + ATP = L-arginyl-tRNA(Arg) + AMP + diphosphate. The sequence is that of Arginine--tRNA ligase (argS) from Mycoplasma genitalium (strain ATCC 33530 / DSM 19775 / NCTC 10195 / G37) (Mycoplasmoides genitalium).